Here is a 188-residue protein sequence, read N- to C-terminus: Elongation factor P (188 aa).

This sequence belongs to the elongation factor P family.

The protein resides in the cytoplasm. It functions in the pathway protein biosynthesis; polypeptide chain elongation. In terms of biological role, involved in peptide bond synthesis. Stimulates efficient translation and peptide-bond synthesis on native or reconstituted 70S ribosomes in vitro. Probably functions indirectly by altering the affinity of the ribosome for aminoacyl-tRNA, thus increasing their reactivity as acceptors for peptidyl transferase. The sequence is that of Elongation factor P from Ureaplasma urealyticum serovar 10 (strain ATCC 33699 / Western).